We begin with the raw amino-acid sequence, 314 residues long: GDP-L-fucose synthase (314 aa).

NADP(+) contacts are provided by residues glycine 15–glycine 21 and leucine 109–serine 112. Tyrosine 140 functions as the Proton donor/acceptor in the catalytic mechanism. NADP(+) is bound by residues lysine 144, proline 167 to leucine 170, and histidine 183. Positions 191, 206, 213, and 273 each coordinate substrate.

The protein belongs to the NAD(P)-dependent epimerase/dehydratase family. Fucose synthase subfamily.

The catalysed reaction is GDP-beta-L-fucose + NADP(+) = GDP-4-dehydro-alpha-D-rhamnose + NADPH + H(+). The protein operates within nucleotide-sugar biosynthesis; GDP-L-fucose biosynthesis via de novo pathway; GDP-L-fucose from GDP-alpha-D-mannose: step 2/2. Catalyzes the two-step NADP-dependent conversion of GDP-4-dehydro-6-deoxy-D-mannose to GDP-fucose, involving an epimerase and a reductase reaction. The sequence is that of GDP-L-fucose synthase from Sinorhizobium fredii (strain NBRC 101917 / NGR234).